The chain runs to 384 residues: MKRISILGVTGSIGTQTLDVLRFHKEDFELVGITANRNIELTLDIIKEFSPKYVAINHEESYKKLVDLVKSEGLKCEVIYGMEGLVKVATLDEIDIVVTSVVGMIGLKPTVEAIRKGKDIALANKETLVVAGELVMREAKENGVKILPVDSEHSAIFQSLQGNAHNKIDKILLTASGGPFRGFTIEDLKSVTPERALKHPKWNMGQKISIDSSTLMNKGLEVIEAHWLFDCSYKDIEVVVHPQSIIHSMVQYTDGAVIAQLGVPDMKLPIQYALNYPNREGNISEKLDLFKIRELTFEKPDLDTFKCLKLAYEAGEKGKLMPTILNGANEVCVELFLNKKITYLQIPEIIEECMNTFDYNKEVTLDNVINLDKEVRQYIYEKYN.

NADPH-binding residues include T10, G11, S12, I13, R37, N38, and N124. Residue K125 coordinates 1-deoxy-D-xylulose 5-phosphate. Residue E126 coordinates NADPH. Residue D150 coordinates Mn(2+). 4 residues coordinate 1-deoxy-D-xylulose 5-phosphate: S151, E152, S176, and H199. A Mn(2+)-binding site is contributed by E152. G205 contributes to the NADPH binding site. S212, N217, K218, and E221 together coordinate 1-deoxy-D-xylulose 5-phosphate. Position 221 (E221) interacts with Mn(2+).

Belongs to the DXR family. Mg(2+) serves as cofactor. Requires Mn(2+) as cofactor.

The catalysed reaction is 2-C-methyl-D-erythritol 4-phosphate + NADP(+) = 1-deoxy-D-xylulose 5-phosphate + NADPH + H(+). It participates in isoprenoid biosynthesis; isopentenyl diphosphate biosynthesis via DXP pathway; isopentenyl diphosphate from 1-deoxy-D-xylulose 5-phosphate: step 1/6. Functionally, catalyzes the NADPH-dependent rearrangement and reduction of 1-deoxy-D-xylulose-5-phosphate (DXP) to 2-C-methyl-D-erythritol 4-phosphate (MEP). The sequence is that of 1-deoxy-D-xylulose 5-phosphate reductoisomerase from Clostridium perfringens (strain 13 / Type A).